An 854-amino-acid polypeptide reads, in one-letter code: Envelope glycoprotein gp160 (854 aa).

Residues Met-1–Ser-31 form the signal peptide. Residues Glu-32 to Ile-675 lie on the Extracellular side of the membrane. Cystine bridges form between Cys-53/Cys-73, Cys-118/Cys-203, Cys-125/Cys-194, Cys-130/Cys-155, Cys-216/Cys-245, and Cys-226/Cys-237. The segment at Cys-130–Asn-154 is V1. N-linked (GlcNAc...) asparagine; by host glycans are attached at residues Asn-134, Asn-140, Asn-143, Asn-154, Asn-158, Asn-186, and Asn-195. The segment at Cys-155–Cys-194 is V2. 9 N-linked (GlcNAc...) asparagine; by host glycosylation sites follow: Asn-239, Asn-260, Asn-267, Asn-274, Asn-299, Asn-331, Asn-336, Asn-351, and Asn-356. The segment at Cys-294–Tyr-327 is V3. Cys-294 and Cys-328 are oxidised to a cystine. The segment at Ala-362 to His-372 is CD4-binding loop. Disulfide bonds link Cys-376-Cys-429 and Cys-383-Cys-402. The tract at residues Cys-383–Cys-402 is V4. N-linked (GlcNAc...) asparagine; by host glycosylation is found at Asn-384, Asn-392, Asn-426, Asn-432, Asn-446, and Asn-450. V5 regions lie at residues Thr-445–Thr-456 and Asn-447–Thr-456. The segment at Ala-501–Ala-522 is fusion peptide. An immunosuppression region spans residues Lys-564–Ile-582. Cys-588 and Cys-594 are disulfide-bonded. N-linked (GlcNAc...) asparagine; by host glycosylation is found at Asn-601, Asn-608, Asn-616, and Asn-628. Residues Lys-624 to Ala-658 adopt a coiled-coil conformation. The MPER; binding to GalCer stretch occupies residues Glu-653–Lys-674. The chain crosses the membrane as a helical span at residues Phe-676 to Val-696. The Cytoplasmic segment spans residues Arg-697–Leu-854. Positions Tyr-703–Leu-706 match the YXXL motif; contains endocytosis signal motif. The Di-leucine internalization motif signature appears at Leu-853–Leu-854.

It belongs to the HIV-1 env protein family. The mature envelope protein (Env) consists of a homotrimer of non-covalently associated gp120-gp41 heterodimers. The resulting complex protrudes from the virus surface as a spike. There seems to be as few as 10 spikes on the average virion. Interacts with host CD4, CCR5 and CXCR4. Gp120 also interacts with the C-type lectins CD209/DC-SIGN and CLEC4M/DC-SIGNR (collectively referred to as DC-SIGN(R)). Gp120 and gp41 interact with GalCer. Gp120 interacts with host ITGA4/ITGB7 complex; on CD4+ T-cells, this interaction results in rapid activation of integrin ITGAL/LFA-1, which facilitates efficient cell-to-cell spreading of HIV-1. Gp120 interacts with cell-associated heparan sulfate; this interaction increases virus infectivity on permissive cells and may be involved in infection of CD4- cells. In terms of assembly, the mature envelope protein (Env) consists of a homotrimer of non-covalently associated gp120-gp41 heterodimers. The resulting complex protrudes from the virus surface as a spike. There seems to be as few as 10 spikes on the average virion. Highly glycosylated by host. The high number of glycan on the protein is reffered to as 'glycan shield' because it contributes to hide protein sequence from adaptive immune system. Post-translationally, palmitoylation of the transmembrane protein and of Env polyprotein (prior to its proteolytic cleavage) is essential for their association with host cell membrane lipid rafts. Palmitoylation is therefore required for envelope trafficking to classical lipid rafts, but not for viral replication. In terms of processing, specific enzymatic cleavages in vivo yield mature proteins. Envelope glycoproteins are synthesized as an inactive precursor that is heavily N-glycosylated and processed likely by host cell furin in the Golgi to yield the mature SU and TM proteins. The cleavage site between SU and TM requires the minimal sequence [KR]-X-[KR]-R. About 2 of the 9 disulfide bonds of gp41 are reduced by P4HB/PDI, following binding to CD4 receptor.

Its subcellular location is the virion membrane. The protein localises to the host cell membrane. The protein resides in the host endosome membrane. In terms of biological role, attaches the virus to the host lymphoid cell by binding to the primary receptor CD4. This interaction induces a structural rearrangement creating a high affinity binding site for a chemokine coreceptor like CXCR4 and/or CCR5. Acts as a ligand for CD209/DC-SIGN and CLEC4M/DC-SIGNR, which are respectively found on dendritic cells (DCs), and on endothelial cells of liver sinusoids and lymph node sinuses. These interactions allow capture of viral particles at mucosal surfaces by these cells and subsequent transmission to permissive cells. HIV subverts the migration properties of dendritic cells to gain access to CD4+ T-cells in lymph nodes. Virus transmission to permissive T-cells occurs either in trans (without DCs infection, through viral capture and transmission), or in cis (following DCs productive infection, through the usual CD4-gp120 interaction), thereby inducing a robust infection. In trans infection, bound virions remain infectious over days and it is proposed that they are not degraded, but protected in non-lysosomal acidic organelles within the DCs close to the cell membrane thus contributing to the viral infectious potential during DCs' migration from the periphery to the lymphoid tissues. On arrival at lymphoid tissues, intact virions recycle back to DCs' cell surface allowing virus transmission to CD4+ T-cells. Its function is as follows. Acts as a class I viral fusion protein. Under the current model, the protein has at least 3 conformational states: pre-fusion native state, pre-hairpin intermediate state, and post-fusion hairpin state. During fusion of viral and target intracellular membranes, the coiled coil regions (heptad repeats) assume a trimer-of-hairpins structure, positioning the fusion peptide in close proximity to the C-terminal region of the ectodomain. The formation of this structure appears to drive apposition and subsequent fusion of viral and target cell membranes. Complete fusion occurs in host cell endosomes and is dynamin-dependent, however some lipid transfer might occur at the plasma membrane. The virus undergoes clathrin-dependent internalization long before endosomal fusion, thus minimizing the surface exposure of conserved viral epitopes during fusion and reducing the efficacy of inhibitors targeting these epitopes. Membranes fusion leads to delivery of the nucleocapsid into the cytoplasm. Functionally, oligomerizes in the host endoplasmic reticulum into predominantly trimers. In a second time, gp160 transits in the host Golgi, where glycosylation is completed. The precursor is then proteolytically cleaved in the trans-Golgi and thereby activated by cellular furin or furin-like proteases to produce gp120 and gp41. The protein is Envelope glycoprotein gp160 of Pan (chimpanzees).